The following is a 2766-amino-acid chain: PDZ domain-containing protein 2 (2766 aa).

Residues L85–R177 enclose the PDZ 1 domain. Disordered stretches follow at residues G189–K315 and M419–S452. The segment covering T242 to A254 has biased composition (acidic residues). Basic and acidic residues predominate over residues H280 to K296. Positions K334–M419 constitute a PDZ 2 domain. S517 is subject to Phosphoserine. In terms of domain architecture, PDZ 3 spans I535 to K621. Positions L627 to M636 are enriched in polar residues. The tract at residues L627–K673 is disordered. Residues S637 to G650 show a composition bias toward low complexity. The PDZ 4 domain maps to E679–H764. The span at Y783–G794 shows a compositional bias: polar residues. Disordered regions lie at residues Y783–S803 and A834–S853. 2 positions are modified to phosphoserine: S891 and S895. Disordered regions lie at residues N915–E966, H990–L1425, I1456–T1531, D1725–Q1909, D1924–S1967, E2015–V2070, F2146–G2174, D2262–T2397, Q2424–D2450, and T2465–P2496. The segment covering S918–G927 has biased composition (acidic residues). Residues G1021 to V1038 are compositionally biased toward basic and acidic residues. Polar residues-rich tracts occupy residues T1040 to L1061, P1126 to P1137, and S1189 to I1220. 2 stretches are compositionally biased toward low complexity: residues S1379–A1393 and I1456–S1471. S1767 carries the post-translational modification Phosphoserine. Over residues C1797 to S1806 the composition is skewed to basic residues. Residues L1884 to T1901 are compositionally biased toward polar residues. Low complexity-rich tracts occupy residues D1924–G1937 and S1947–G1963. 2 stretches are compositionally biased toward low complexity: residues P2280–S2296 and R2305–L2321. Composition is skewed to polar residues over residues P2322–G2347 and P2362–S2372. The PDZ 5 domain occupies F2550–K2634. The interval G2635–A2667 is disordered. One can recognise a PDZ 6 domain in the interval C2678–H2763.

Interacts with SCN10A, CTNND2 and PKP4. A secreted form is produced by caspase-mediated proteolytic cleavage. In terms of tissue distribution, expressed in the heart, liver, brain, spleen, lung, kidney, testis and skeletal muscle.

It is found in the nucleus. The protein localises to the cytoplasm. The protein resides in the endoplasmic reticulum. It localises to the cell junction. Its subcellular location is the secreted. This is PDZ domain-containing protein 2 (Pdzd2) from Rattus norvegicus (Rat).